Here is a 114-residue protein sequence, read N- to C-terminus: Astacin-like metalloprotease toxin 4 (114 aa).

The 114-residue stretch at 1-114 (RETNENDYVD…GLLCLFKGSV (114 aa)) folds into the Peptidase M12A domain. Residues C17 and C38 are joined by a disulfide bond. H46 provides a ligand contact to Zn(2+). The active site involves E47. Positions 50 and 56 each coordinate Zn(2+). N-linked (GlcNAc...) asparagine glycosylation is present at N88.

In terms of assembly, monomer. The cofactor is Zn(2+). Expressed by the venom gland.

The protein resides in the secreted. With respect to regulation, inhibited by 1,10-phenanthroline. Functionally, zinc metalloprotease. Provoques deadhesion of endothelial cells from cell cultures, and also degradation of fibronectin, fibrinogen and gelatin in vitro. Its role in the venom is not fully understood but it might act as a spreading factor that facilitates diffusion of other venom toxins. Alternatively, it might be involved in the proteolytic processing of other venom toxins or it might play a role in extra-oral digestion of prey. In Loxosceles laeta (South American recluse spider), this protein is Astacin-like metalloprotease toxin 4.